A 118-amino-acid polypeptide reads, in one-letter code: uncharacterized protein (118 aa).

3 consecutive transmembrane segments (helical) span residues 17-37, 60-80, and 90-110; these read IIII…FAIL, INYT…IMIF, and YIEQ…GSFW.

The protein resides in the membrane. This is an uncharacterized protein from Acanthamoeba polyphaga mimivirus (APMV).